Reading from the N-terminus, the 118-residue chain is Small ribosomal subunit protein uS13 (118 aa).

The interval 94–118 (GLPVRGQRTKTNARTRKGPRKPIRK) is disordered.

It belongs to the universal ribosomal protein uS13 family. In terms of assembly, part of the 30S ribosomal subunit. Forms a loose heterodimer with protein S19. Forms two bridges to the 50S subunit in the 70S ribosome.

In terms of biological role, located at the top of the head of the 30S subunit, it contacts several helices of the 16S rRNA. In the 70S ribosome it contacts the 23S rRNA (bridge B1a) and protein L5 of the 50S subunit (bridge B1b), connecting the 2 subunits; these bridges are implicated in subunit movement. Contacts the tRNAs in the A and P-sites. The protein is Small ribosomal subunit protein uS13 of Marinobacter nauticus (strain ATCC 700491 / DSM 11845 / VT8) (Marinobacter aquaeolei).